Reading from the N-terminus, the 343-residue chain is Phosphate acyltransferase (343 aa).

The protein belongs to the PlsX family. As to quaternary structure, homodimer. Probably interacts with PlsY.

The protein localises to the cytoplasm. The catalysed reaction is a fatty acyl-[ACP] + phosphate = an acyl phosphate + holo-[ACP]. Its pathway is lipid metabolism; phospholipid metabolism. Its function is as follows. Catalyzes the reversible formation of acyl-phosphate (acyl-PO(4)) from acyl-[acyl-carrier-protein] (acyl-ACP). This enzyme utilizes acyl-ACP as fatty acyl donor, but not acyl-CoA. The sequence is that of Phosphate acyltransferase from Coxiella burnetii (strain Dugway 5J108-111).